The chain runs to 155 residues: Protein SprT-like (155 aa).

Positions 7 to 144 (QRHMEEVSLQ…CGSCGGKLKQ (138 aa)) constitute a SprT-like domain. Position 67 (H67) interacts with Zn(2+). The active site involves E68. A Zn(2+)-binding site is contributed by H71.

The protein belongs to the SprT family. Requires Zn(2+) as cofactor.

The protein resides in the cytoplasm. This chain is Protein SprT-like, found in Listeria welshimeri serovar 6b (strain ATCC 35897 / DSM 20650 / CCUG 15529 / CIP 8149 / NCTC 11857 / SLCC 5334 / V8).